Here is a 212-residue protein sequence, read N- to C-terminus: Eukaryotic translation initiation factor 4E-1 (212 aa).

A disulfide bond links Cys-125 and Cys-129.

Belongs to the eukaryotic initiation factor 4E family. As to quaternary structure, EIF4F is a multi-subunit complex, the composition of which varies with external and internal environmental conditions. It is composed of at least EIF4A, EIF4E and EIF4G. EIF4E is also known to interact with other partners, including pgl-1. Interacts with ifet-1. Enriched in the germline from L3 larvae to adults; regions of the gonad undergoing spermatogenesis. Expressed in germ granules (P granules); when associated with pgl-1.

It localises to the cytoplasm. Recognizes and binds the 7-methylguanosine-containing mRNA cap during an early step in the initiation of protein synthesis and facilitates ribosome binding by inducing the unwinding of the mRNAs secondary structures. All 5 eIF4E proteins bind monomethyl cap structures. Only ife-1, ife-2 and ife-5 bind trimethyl cap structures which result from trans-splicing. Translation of trimethyl cap structure mRNAs may be regulated by intracellular redox state; disulfide bonds change the width and depth of the cap-binding cavity determining selectivity to mRNA caps. Required for progression through meiotic divisions during spermatogenesis and for the production of viable sperm. It is not required during oogenesis. The chain is Eukaryotic translation initiation factor 4E-1 (ife-1) from Caenorhabditis elegans.